The following is a 110-amino-acid chain: Small ribosomal subunit protein eS25 (110 aa).

The tract at residues M1 to G37 is disordered. Residues M12–G37 show a composition bias toward basic and acidic residues.

The protein belongs to the eukaryotic ribosomal protein eS25 family.

This is Small ribosomal subunit protein eS25 (rps25e) from Saccharolobus solfataricus (strain ATCC 35092 / DSM 1617 / JCM 11322 / P2) (Sulfolobus solfataricus).